The following is a 419-amino-acid chain: C2 calcium-dependent domain-containing protein 4C (419 aa).

Disordered regions lie at residues 1 to 96, 115 to 136, 151 to 225, and 247 to 300; these read MRKT…LASE, EDWTAEEATNADPQAQGAMSLP, AESP…SPFG, and VSQL…HTVK. The segment covering 75 to 94 has biased composition (low complexity); it reads LASPGPRRAPRSPRLPAKLA. Residues 186–196 show a composition bias toward gly residues; that stretch reads KGNGGDGGSRE. A compositionally biased stretch (polar residues) spans 212–225; the sequence is ESDTGSSAESSPFG. Phosphoserine occurs at positions 259, 261, and 270. The C2 domain occupies 303-419; sequence TRGSVRLLAE…LPLTSLLPFL (117 aa).

It belongs to the C2CD4 family.

This chain is C2 calcium-dependent domain-containing protein 4C (C2cd4c), found in Mus musculus (Mouse).